The sequence spans 623 residues: Protein FAM234B (623 aa).

The segment at 1-82 (MATVLSRALK…TSERAPEGYP (82 aa)) is disordered. The helical transmembrane segment at 104–124 (AVFLLTVVISMILVLVCAFLI) threads the bilayer.

Belongs to the FAM234 family.

The protein localises to the membrane. It is found in the golgi outpost. Its subcellular location is the cytoplasm. It localises to the cytoskeleton. The protein resides in the microtubule organizing center. The polypeptide is Protein FAM234B (FAM234B) (Gallus gallus (Chicken)).